The following is a 130-amino-acid chain: Small ribosomal subunit protein uS9 (130 aa).

The tract at residues 104–130 (LTRDPRMKERRKYGLKKARKAPQFSKR) is disordered. The span at 111-130 (KERRKYGLKKARKAPQFSKR) shows a compositional bias: basic residues.

Belongs to the universal ribosomal protein uS9 family.

The protein is Small ribosomal subunit protein uS9 of Moorella thermoacetica (strain ATCC 39073 / JCM 9320).